Consider the following 423-residue polypeptide: Ornithine cyclodeaminase (423 aa).

10 residues coordinate NAD(+): asparagine 241, alanine 242, aspartate 320, threonine 352, methionine 353, leucine 354, histidine 355, aspartate 373, aspartate 396, and valine 397.

It belongs to the AgrE/ArgZ ornithine cyclodeaminase family. NAD(+) is required as a cofactor.

The enzyme catalyses L-ornithine = L-proline + NH4(+). Catalyzes the conversion of ornithine to proline, with the release of ammonia. The polypeptide is Ornithine cyclodeaminase (Methanocaldococcus jannaschii (strain ATCC 43067 / DSM 2661 / JAL-1 / JCM 10045 / NBRC 100440) (Methanococcus jannaschii)).